Consider the following 385-residue polypeptide: Flap endonuclease 1 (385 aa).

Positions 1–105 are N-domain; that stretch reads MGIKGLNAII…HELSKRSARR (105 aa). Aspartate 34 serves as a coordination point for Mg(2+). DNA is bound by residues arginine 47 and arginine 71. Mg(2+) is bound by residues aspartate 87, glutamate 156, glutamate 158, aspartate 177, and aspartate 179. The I-domain stretch occupies residues 120–251; it reads EKLKHERRLV…VTALKLIKEH (132 aa). Glutamate 156 serves as a coordination point for DNA. DNA is bound by residues glycine 229 and aspartate 231. Aspartate 231 is a Mg(2+) binding site. Residues 338 to 346 are interaction with PCNA; the sequence is VQGRLDGFF. Residues 356–370 show a composition bias toward low complexity; that stretch reads LAAANAKAKSTKAGK. The tract at residues 356–385 is disordered; sequence LAAANAKAKSTKAGKQATKGKVGKPGRPRK. Over residues 376–385 the composition is skewed to basic residues; that stretch reads KVGKPGRPRK.

It belongs to the XPG/RAD2 endonuclease family. FEN1 subfamily. As to quaternary structure, interacts with PCNA. Three molecules of FEN1 bind to one PCNA trimer with each molecule binding to one PCNA monomer. PCNA stimulates the nuclease activity without altering cleavage specificity. Mg(2+) serves as cofactor. Phosphorylated. Phosphorylation upon DNA damage induces relocalization to the nuclear plasma.

It is found in the nucleus. The protein localises to the nucleolus. It localises to the nucleoplasm. The protein resides in the mitochondrion. In terms of biological role, structure-specific nuclease with 5'-flap endonuclease and 5'-3' exonuclease activities involved in DNA replication and repair. During DNA replication, cleaves the 5'-overhanging flap structure that is generated by displacement synthesis when DNA polymerase encounters the 5'-end of a downstream Okazaki fragment. It enters the flap from the 5'-end and then tracks to cleave the flap base, leaving a nick for ligation. Also involved in the long patch base excision repair (LP-BER) pathway, by cleaving within the apurinic/apyrimidinic (AP) site-terminated flap. Acts as a genome stabilization factor that prevents flaps from equilibrating into structures that lead to duplications and deletions. Also possesses 5'-3' exonuclease activity on nicked or gapped double-stranded DNA, and exhibits RNase H activity. Also involved in replication and repair of rDNA and in repairing mitochondrial DNA. The chain is Flap endonuclease 1 from Lachancea thermotolerans (strain ATCC 56472 / CBS 6340 / NRRL Y-8284) (Yeast).